Reading from the N-terminus, the 787-residue chain is Glutamine-dependent NAD(+) synthetase (787 aa).

A CN hydrolase domain is found at 5 to 275; that stretch reads VTVAVSTLNQ…VEVTLATIDL (271 aa). Catalysis depends on glutamate 45, which acts as the Proton acceptor; for glutaminase activity. Lysine 114 functions as the For glutaminase activity in the catalytic mechanism. Cysteine 175 serves as the catalytic Nucleophile; for glutaminase activity. The interval 325 to 787 is ligase; that stretch reads MHTPEEEIAL…KIKDRTGIPV (463 aa). 355 to 362 is an ATP binding site; that stretch reads PLSGGVDS. Serine 357 is a catalytic residue. The residue at position 703 (serine 703) is a Phosphoserine.

This sequence in the C-terminal section; belongs to the NAD synthetase family.

It catalyses the reaction deamido-NAD(+) + L-glutamine + ATP + H2O = L-glutamate + AMP + diphosphate + NAD(+) + H(+). The protein operates within cofactor biosynthesis; NAD(+) biosynthesis; NAD(+) from deamido-NAD(+) (L-Gln route): step 1/1. Catalyzes the ATP-dependent amidation of deamido-NAD to form NAD. Uses L-glutamine as a nitrogen source. Because of its role in energy metabolism, involved in the modulation of aged-related cardiac function, mobility, and lifespan. The chain is Glutamine-dependent NAD(+) synthetase from Drosophila melanogaster (Fruit fly).